Here is a 220-residue protein sequence, read N- to C-terminus: Botcinic acid biosynthesis cluster B protein 12 (220 aa).

It participates in polyketide biosynthesis. Part of the gene cluster B that mediates the biosynthesis of botcinic acid and its botcinin derivatives, acetate-derived polyketides that contribute to virulence when combined with the sesquiterpene botrydial. Botcinic acid and its derivatives have been shown to induce chlorosis and necrosis during host plant infection, but also have antifungal activities. Two polyketide synthases, BOA6 and BOA9, are involved in the biosynthesis of botcinins. BOA6 mediates the formation of the per-methylated tetraketide core by condensation of four units of malonyl-CoA with one unit of acetyl-CoA, which would be methylated in activated methylene groups to yield a bicyclic acid intermediate that could then either be converted to botrylactone derivatives or lose the starter acetate unit through a retro-Claisen type C-C bond cleavage to yield botcinin derivatives. The second polyketide synthase, BOA9, is probably required for the biosynthesis of the tetraketide side chain of botcinins. The methyltransferase (MT) domain within BOA6 is probably responsible for the incorporation of four methyl groups. The trans-enoyl reductase BOA5 might take over the enoyl reductase function of BOA6 that misses an ER domain. The monooxygenases BOA2, BOA3 and BOA4 might be involved in further hydroxylations at C4, C5 and C8, whereas BOA7, close to BOA9, could potentially be involved in the hydroxylation at C4 in the side chain of botcinins. The chain is Botcinic acid biosynthesis cluster B protein 12 from Botryotinia fuckeliana (strain B05.10) (Noble rot fungus).